The sequence spans 85 residues: Insect toxin 2-53 (85 aa).

The signal sequence occupies residues 1-21 (MKLLLLLIVSASMLIESLVNA). The LCN-type CS-alpha/beta domain occupies 22-82 (DGYIKRRDGC…TWKSETNTCG (61 aa)). Intrachain disulfides connect Cys31/Cys81, Cys35/Cys56, Cys42/Cys63, and Cys46/Cys65. Gly82 is subject to Glycine amide.

Belongs to the long (4 C-C) scorpion toxin superfamily. Sodium channel inhibitor family. Beta subfamily. In terms of tissue distribution, expressed by the venom gland.

The protein localises to the secreted. Functionally, depressant insect toxins cause a transient contraction paralysis followed by a slow flaccid paralysis. They bind voltage-independently to sodium channels (Nav) and block action potentials, primarily by depolarizing the axonal membrane and suppressing the sodium current. The sequence is that of Insect toxin 2-53 from Leiurus hebraeus (Hebrew deathstalker scorpion).